Consider the following 213-residue polypeptide: Cell division protein SepF (213 aa).

A disordered region spans residues 27–103; sequence VDAPAPRRAP…GSLRGSAPTR (77 aa). Basic and acidic residues-rich tracts occupy residues 35–51 and 72–90; these read APVE…RFAD and DEDR…DRPA.

This sequence belongs to the SepF family. As to quaternary structure, homodimer. Interacts with FtsZ.

It is found in the cytoplasm. Its function is as follows. Cell division protein that is part of the divisome complex and is recruited early to the Z-ring. Probably stimulates Z-ring formation, perhaps through the cross-linking of FtsZ protofilaments. Its function overlaps with FtsA. This is Cell division protein SepF from Mycobacteroides abscessus (strain ATCC 19977 / DSM 44196 / CCUG 20993 / CIP 104536 / JCM 13569 / NCTC 13031 / TMC 1543 / L948) (Mycobacterium abscessus).